A 139-amino-acid chain; its full sequence is Phosphoribosyl-AMP cyclohydrolase (139 aa).

Asp-95 is a binding site for Mg(2+). Zn(2+) is bound at residue Cys-96. Positions 97 and 99 each coordinate Mg(2+). The Zn(2+) site is built by Cys-114 and Cys-121.

This sequence belongs to the PRA-CH family. In terms of assembly, homodimer. Mg(2+) is required as a cofactor. Zn(2+) serves as cofactor.

Its subcellular location is the cytoplasm. It catalyses the reaction 1-(5-phospho-beta-D-ribosyl)-5'-AMP + H2O = 1-(5-phospho-beta-D-ribosyl)-5-[(5-phospho-beta-D-ribosylamino)methylideneamino]imidazole-4-carboxamide. It participates in amino-acid biosynthesis; L-histidine biosynthesis; L-histidine from 5-phospho-alpha-D-ribose 1-diphosphate: step 3/9. Catalyzes the hydrolysis of the adenine ring of phosphoribosyl-AMP. The sequence is that of Phosphoribosyl-AMP cyclohydrolase from Chelativorans sp. (strain BNC1).